The chain runs to 95 residues: Aspartyl/glutamyl-tRNA(Asn/Gln) amidotransferase subunit C (95 aa).

This sequence belongs to the GatC family. In terms of assembly, heterotrimer of A, B and C subunits.

It carries out the reaction L-glutamyl-tRNA(Gln) + L-glutamine + ATP + H2O = L-glutaminyl-tRNA(Gln) + L-glutamate + ADP + phosphate + H(+). The enzyme catalyses L-aspartyl-tRNA(Asn) + L-glutamine + ATP + H2O = L-asparaginyl-tRNA(Asn) + L-glutamate + ADP + phosphate + 2 H(+). Allows the formation of correctly charged Asn-tRNA(Asn) or Gln-tRNA(Gln) through the transamidation of misacylated Asp-tRNA(Asn) or Glu-tRNA(Gln) in organisms which lack either or both of asparaginyl-tRNA or glutaminyl-tRNA synthetases. The reaction takes place in the presence of glutamine and ATP through an activated phospho-Asp-tRNA(Asn) or phospho-Glu-tRNA(Gln). This Ruegeria pomeroyi (strain ATCC 700808 / DSM 15171 / DSS-3) (Silicibacter pomeroyi) protein is Aspartyl/glutamyl-tRNA(Asn/Gln) amidotransferase subunit C.